Reading from the N-terminus, the 74-residue chain is Putative membrane protein insertion efficiency factor (74 aa).

Belongs to the UPF0161 family.

Its subcellular location is the cell membrane. Functionally, could be involved in insertion of integral membrane proteins into the membrane. This chain is Putative membrane protein insertion efficiency factor, found in Bacillus pumilus (strain SAFR-032).